A 20-amino-acid polypeptide reads, in one-letter code: 54 kDa cell wall protein (20 aa).

The tract at residues 1 to 20 (KVPVDDQFRRVNNGGATDTR) is disordered.

The protein localises to the secreted. It localises to the cell wall. The chain is 54 kDa cell wall protein from Arabidopsis thaliana (Mouse-ear cress).